Here is a 125-residue protein sequence, read N- to C-terminus: Basic leucine zipper transcriptional factor ATF-like (125 aa).

A compositionally biased stretch (low complexity) spans Met1–Arg14. Residues Met1–Ser58 form a disordered region. One can recognise a bZIP domain in the interval Asp26 to His89. The interval Arg28–Lys50 is basic motif. Ser43 carries the phosphoserine modification. Thr48 is modified (phosphothreonine). Residues Leu54–Leu75 are leucine-zipper.

Belongs to the bZIP family. In terms of assembly, heterodimer; mainly heterodimerizes with JUNB. The BATF-JUNB heterodimer interacts with IRF4 and IRF8. Interacts (via bZIP domain) with IRF4 and IRF8; the interaction is direct. Also forms heterodimers with JUN and JUND. Also interacts with IFI35. In terms of processing, phosphorylated on serine and threonine residues and at least one tyrosine residue. Phosphorylation at Ser-43 inhibit DNA binding activity and transforms it as a negative regulator of AP-1 mediated transcription. Phosphorylated. As to expression, expressed at highest levels in lung, and at lower levels in placenta, liver, kidney, spleen, and peripheral blood. Detected in SW480 colorectal cancer cell line and several hematopoietic tumor cell lines, including Raji Burkitt's lymphoma. Strongly expressed in mature B- and T-lymphocytes. Also expressed in moderate levels in lymph node and appendix and at low levels in thymus and bone marrow.

It is found in the nucleus. The protein resides in the cytoplasm. In terms of biological role, AP-1 family transcription factor that controls the differentiation of lineage-specific cells in the immune system: specifically mediates the differentiation of T-helper 17 cells (Th17), follicular T-helper cells (TfH), CD8(+) dendritic cells and class-switch recombination (CSR) in B-cells. Acts via the formation of a heterodimer with JUNB that recognizes and binds DNA sequence 5'-TGA[CG]TCA-3'. The BATF-JUNB heterodimer also forms a complex with IRF4 (or IRF8) in immune cells, leading to recognition of AICE sequence (5'-TGAnTCA/GAAA-3'), an immune-specific regulatory element, followed by cooperative binding of BATF and IRF4 (or IRF8) and activation of genes. Controls differentiation of T-helper cells producing interleukin-17 (Th17 cells) by binding to Th17-associated gene promoters: regulates expression of the transcription factor RORC itself and RORC target genes such as IL17 (IL17A or IL17B). Also involved in differentiation of follicular T-helper cells (TfH) by directing expression of BCL6 and MAF. In B-cells, involved in class-switch recombination (CSR) by controlling the expression of both AICDA and of germline transcripts of the intervening heavy-chain region and constant heavy-chain region (I(H)-C(H)). Following infection, can participate in CD8(+) dendritic cell differentiation via interaction with IRF4 and IRF8 to mediate cooperative gene activation. Regulates effector CD8(+) T-cell differentiation by regulating expression of SIRT1. Following DNA damage, part of a differentiation checkpoint that limits self-renewal of hematopoietic stem cells (HSCs): up-regulated by STAT3, leading to differentiation of HSCs, thereby restricting self-renewal of HSCs. In Homo sapiens (Human), this protein is Basic leucine zipper transcriptional factor ATF-like (BATF).